The following is a 166-amino-acid chain: MTESTSRRPAYARLLDRAVRILAVRDHSEQELRRKLAAPIMGKNGPEEIDATAEDYERVIAWCHEHGYLDDSRFVARFIASRSRKGYGPARIRQELNQKGISREATEKAMRECDIDWCALARDQATRKYGEPLPTVFSEKVKIQRFLLYRGYLMEDIQEIWRNFAD.

This sequence belongs to the RecX family.

The protein localises to the cytoplasm. Modulates RecA activity. The polypeptide is Regulatory protein RecX (Escherichia coli (strain K12 / MC4100 / BW2952)).